Consider the following 800-residue polypeptide: Phenylalanine--tRNA ligase beta subunit (800 aa).

The tRNA-binding domain maps to 39-154 (TKDIKNLVVG…ESQVPGTDAL (116 aa)). The 76-residue stretch at 408–483 (AFITPIDITA…RIYGYDDIPS (76 aa)) folds into the B5 domain. Mg(2+) contacts are provided by D461, D467, E470, and E471. An FDX-ACB domain is found at 708–800 (PRFPGMSRDI…ALIEQGAVIR (93 aa)).

This sequence belongs to the phenylalanyl-tRNA synthetase beta subunit family. Type 1 subfamily. In terms of assembly, tetramer of two alpha and two beta subunits. Mg(2+) serves as cofactor.

Its subcellular location is the cytoplasm. It carries out the reaction tRNA(Phe) + L-phenylalanine + ATP = L-phenylalanyl-tRNA(Phe) + AMP + diphosphate + H(+). The sequence is that of Phenylalanine--tRNA ligase beta subunit from Staphylococcus aureus (strain Mu50 / ATCC 700699).